The sequence spans 246 residues: 14-3-3 protein beta/alpha (246 aa).

An N-acetylmethionine modification is found at methionine 1. N-acetylthreonine; in 14-3-3 protein beta/alpha, N-terminally processed is present on threonine 2. Phosphothreonine is present on threonine 2. Lysine 5 is modified (N6-acetyllysine). Lysine 51 carries the post-translational modification N6-acetyllysine; alternate. A Glycyl lysine isopeptide (Lys-Gly) (interchain with G-Cter in SUMO2); alternate cross-link involves residue lysine 51. Serine 60 is subject to Phosphoserine. At lysine 70 the chain carries N6-acetyllysine. 3'-nitrotyrosine is present on residues tyrosine 84 and tyrosine 106. At lysine 117 the chain carries N6-acetyllysine. Residues serine 186 and serine 232 each carry the phosphoserine modification.

The protein belongs to the 14-3-3 family. As to quaternary structure, homodimer. Interacts with SAMSN1 and PRKCE. Interacts with AKAP13. Interacts with SSH1 and TORC2/CRTC2. Interacts with ABL1; the interaction results in cytoplasmic location of ABL1 and inhibition of cABL-mediated apoptosis. Interacts with ROR2 (dimer); the interaction results in phosphorylation of YWHAB on tyrosine residues. Interacts with GAB2. Interacts with YAP1 (phosphorylated form). Interacts with the phosphorylated (by AKT1) form of SRPK2. Interacts with PKA-phosphorylated AANAT. Interacts with MYO1C. Interacts with SIRT2. Interacts with the 'Thr-369' phosphorylated form of DAPK2. Interacts with PI4KB, TBC1D22A and TBC1D22B. Interacts with the 'Ser-1134' and 'Ser-1161' phosphorylated form of SOS1. Interacts (via phosphorylated form) with YWHAB; this interaction occurs in a protein kinase AKT1-dependent manner. Interacts with SLITRK1. Interacts with SYNPO2 (phosphorylated form); YWHAB competes with ACTN2 for interaction with SYNPO2. Interacts with RIPOR2 (via phosphorylated form); this interaction occurs in a chemokine-dependent manner and does not compete for binding of RIPOR2 with RHOA nor blocks inhibition of RIPOR2-mediated RHOA activity. Interacts with MARK2 and MARK3. Interacts with TESK1; the interaction is dependent on the phosphorylation of TESK1 'Ser-439' and inhibits TESK1 kinase activity. Interacts with MEFV. Interacts with HDAC4. Interacts with ADAM22 (via C-terminus). Isoform alpha differs from isoform beta in being phosphorylated. Phosphorylated on Ser-60 by protein kinase C delta type catalytic subunit in a sphingosine-dependent fashion. Post-translationally, isoform Short contains a N-acetylmethionine at position 1.

It is found in the cytoplasm. Its subcellular location is the melanosome. Functionally, adapter protein implicated in the regulation of a large spectrum of both general and specialized signaling pathways. Binds to a large number of partners, usually by recognition of a phosphoserine or phosphothreonine motif. Binding generally results in the modulation of the activity of the binding partner. Negative regulator of osteogenesis. Blocks the nuclear translocation of the phosphorylated form (by AKT1) of SRPK2 and antagonizes its stimulatory effect on cyclin D1 expression resulting in blockage of neuronal apoptosis elicited by SRPK2. Negative regulator of signaling cascades that mediate activation of MAP kinases via AKAP13. This is 14-3-3 protein beta/alpha (Ywhab) from Mus musculus (Mouse).